Consider the following 181-residue polypeptide: Transmembrane protein 154 (181 aa).

Positions 1–22 (MTVPCAALVLALGLAFGQSSQG) are cleaved as a signal peptide. A disordered region spans residues 19–47 (SSQGNDEESEYSGQSITEEENSEDETTRS). Topologically, residues 23 to 74 (NDEESEYSGQSITEEENSEDETTRSALATVTTEALAENVNSTHTNDTSNQVE) are extracellular. Residues 75–95 (FILMVAIPLAALLILLFMVLI) form a helical membrane-spanning segment. Residues 96-181 (ATYFKSKRPK…PNPSPSDNES (86 aa)) are Cytoplasmic-facing. The tract at residues 103–122 (RPKQEPSSQGSQSALQTHEL) is disordered. Residues 107-118 (EPSSQGSQSALQ) are compositionally biased toward polar residues. The residue at position 160 (Tyr-160) is a Phosphotyrosine. The segment at 161-181 (ECLPTLKEEKEPNPSPSDNES) is disordered. Ser-177 is modified (phosphoserine).

The protein resides in the membrane. In Mus musculus (Mouse), this protein is Transmembrane protein 154 (Tmem154).